Here is a 118-residue protein sequence, read N- to C-terminus: Small ribosomal subunit protein uS13 (118 aa).

Residues 92-118 (RRSLPVRGQRTKTNARTRKGPRKPIKK) are disordered.

This sequence belongs to the universal ribosomal protein uS13 family. Part of the 30S ribosomal subunit. Forms a loose heterodimer with protein S19. Forms two bridges to the 50S subunit in the 70S ribosome.

In terms of biological role, located at the top of the head of the 30S subunit, it contacts several helices of the 16S rRNA. In the 70S ribosome it contacts the 23S rRNA (bridge B1a) and protein L5 of the 50S subunit (bridge B1b), connecting the 2 subunits; these bridges are implicated in subunit movement. Contacts the tRNAs in the A and P-sites. The polypeptide is Small ribosomal subunit protein uS13 (Acinetobacter baylyi (strain ATCC 33305 / BD413 / ADP1)).